The chain runs to 347 residues: NADH-ubiquinone oxidoreductase chain 2 (347 aa).

10 consecutive transmembrane segments (helical) span residues 3–23, 25–45, 59–79, 96–116, 122–142, 149–169, 201–221, 239–259, 274–294, and 326–346; these read PMIFIILLATIMLGSSIVMMS, HWFMTWLGFEMNMMAIVPVLM, YFLTQATASMILMLAIIINLM, MLITIALVMKLGLAPFHFWVP, IPLSSGLILLTWQKIAPLSLL, INMELFLTMSLLSIVIGGWGG, SFLNLLVYILMTSSMFALLIF, IIATMSLIILLSLGGLPPLTG, NSTILPTLMAISALLNLFFYI, and ILPLITISTLALPLTPLFLML.

It belongs to the complex I subunit 2 family. As to quaternary structure, core subunit of respiratory chain NADH dehydrogenase (Complex I) which is composed of 45 different subunits. Interacts with TMEM242.

It is found in the mitochondrion inner membrane. The catalysed reaction is a ubiquinone + NADH + 5 H(+)(in) = a ubiquinol + NAD(+) + 4 H(+)(out). Functionally, core subunit of the mitochondrial membrane respiratory chain NADH dehydrogenase (Complex I) that is believed to belong to the minimal assembly required for catalysis. Complex I functions in the transfer of electrons from NADH to the respiratory chain. The immediate electron acceptor for the enzyme is believed to be ubiquinone. This Crocidura hildegardeae (Hildegarde's shrew) protein is NADH-ubiquinone oxidoreductase chain 2.